Here is a 236-residue protein sequence, read N- to C-terminus: MLKIISGKYKNQIIPTAQNIKYRPSTGKLKEAIFSILTSGEFIGNKLFNENTQILDLFAGSGSLAFESLSRGAGFATLIDIDTYSLKIAAGFAKSLNIENNVHFININALNLQKTTRYLSKQTDRNEFITTAESYIGISKHKSTNITYKLPLKEQFCNMSNKVFDLVFIDPPYNKDIVPKVMKLLIKNNWLKNGTIIVIEMSKTDDYDLDKNIEIIRAKLYGQSKLLVLRYSSHLR.

The RPE1 insert domain maps to 117-160; sequence RYLSKQTDRNEFITTAESYIGISKHKSTNITYKLPLKEQFCNMS.

This is an uncharacterized protein from Rickettsia prowazekii (strain Madrid E).